Reading from the N-terminus, the 139-residue chain is MRHYEIVFLVHPDQSEQVGGMVERYTKAIEEDGGKIHRLEDWGRRQLAYAINNVHKAHYVLMNVECSAKALAELEDNFRYNDAVIRNLVMRRDEAVTEQSEMLKAEESRNERRERRERPNDNAEGADGDDNSDSDNADE.

The span at 95-121 (AVTEQSEMLKAEESRNERRERRERPND) shows a compositional bias: basic and acidic residues. The disordered stretch occupies residues 95-139 (AVTEQSEMLKAEESRNERRERRERPNDNAEGADGDDNSDSDNADE). Residues 124 to 139 (EGADGDDNSDSDNADE) show a composition bias toward acidic residues.

The protein belongs to the bacterial ribosomal protein bS6 family.

Its function is as follows. Binds together with bS18 to 16S ribosomal RNA. This chain is Small ribosomal subunit protein bS6, found in Pseudomonas aeruginosa (strain LESB58).